Here is a 124-residue protein sequence, read N- to C-terminus: Small polypeptide ROTUNDIFOLIA LIKE 3 (124 aa).

The disordered stretch occupies residues 1-25; that stretch reads MEDERWKLSSSKGRSKSGRSCSSSS. Residues N35 and N38 are each glycosylated (N-linked (GlcNAc...) asparagine). A helical membrane pass occupies residues 59–75; the sequence is AWSAAGAGGGGASSSSS. The interval 60–95 is disordered; sequence WSAAGAGGGGASSSSSSQHQHQQQQQQSNNSQRLSK. Over residues 71–91 the composition is skewed to low complexity; that stretch reads SSSSSSQHQHQQQQQQSNNSQ. An N-linked (GlcNAc...) asparagine glycan is attached at N88. The interval 92-124 is required for DVL/RTFL small polypeptide activity; that stretch reads RLSKKCVEAVKEHRARFYIVRRCVSMLVCWRDY.

It belongs to the DVL/RTFL small polypeptides family.

Its subcellular location is the cell membrane. Functionally, small polypeptide acting as a regulatory molecule which coordinates cellular responses required for differentiation, growth and development, probably by restricting polar cell proliferation in lateral organs (e.g. leaves and petioles). The chain is Small polypeptide ROTUNDIFOLIA LIKE 3 from Oryza sativa subsp. indica (Rice).